Here is a 317-residue protein sequence, read N- to C-terminus: Transaldolase (317 aa).

Catalysis depends on lysine 132, which acts as the Schiff-base intermediate with substrate.

This sequence belongs to the transaldolase family. Type 1 subfamily. In terms of assembly, homodimer.

It localises to the cytoplasm. It carries out the reaction D-sedoheptulose 7-phosphate + D-glyceraldehyde 3-phosphate = D-erythrose 4-phosphate + beta-D-fructose 6-phosphate. It functions in the pathway carbohydrate degradation; pentose phosphate pathway; D-glyceraldehyde 3-phosphate and beta-D-fructose 6-phosphate from D-ribose 5-phosphate and D-xylulose 5-phosphate (non-oxidative stage): step 2/3. Transaldolase is important for the balance of metabolites in the pentose-phosphate pathway. In Mannheimia succiniciproducens (strain KCTC 0769BP / MBEL55E), this protein is Transaldolase.